A 180-amino-acid chain; its full sequence is UPF0227 protein YE1706 (180 aa).

This sequence belongs to the UPF0227 family.

In Yersinia enterocolitica serotype O:8 / biotype 1B (strain NCTC 13174 / 8081), this protein is UPF0227 protein YE1706.